The chain runs to 426 residues: Serine--tRNA ligase (426 aa).

Residue 231–233 coordinates L-serine; sequence TAE. Residue 262-264 participates in ATP binding; it reads RSE. Glu285 is a binding site for L-serine. 349–352 provides a ligand contact to ATP; that stretch reads EISS. Ser385 is an L-serine binding site.

Belongs to the class-II aminoacyl-tRNA synthetase family. Type-1 seryl-tRNA synthetase subfamily. In terms of assembly, homodimer. The tRNA molecule binds across the dimer.

It localises to the cytoplasm. The catalysed reaction is tRNA(Ser) + L-serine + ATP = L-seryl-tRNA(Ser) + AMP + diphosphate + H(+). It carries out the reaction tRNA(Sec) + L-serine + ATP = L-seryl-tRNA(Sec) + AMP + diphosphate + H(+). The protein operates within aminoacyl-tRNA biosynthesis; selenocysteinyl-tRNA(Sec) biosynthesis; L-seryl-tRNA(Sec) from L-serine and tRNA(Sec): step 1/1. Its function is as follows. Catalyzes the attachment of serine to tRNA(Ser). Is also able to aminoacylate tRNA(Sec) with serine, to form the misacylated tRNA L-seryl-tRNA(Sec), which will be further converted into selenocysteinyl-tRNA(Sec). In Saccharophagus degradans (strain 2-40 / ATCC 43961 / DSM 17024), this protein is Serine--tRNA ligase.